Reading from the N-terminus, the 1399-residue chain is MNQEVMNLFNPQAPAQTFDSIRISLASPEKILSWSYGEIKKPETINYRTFKPERDGLFCARIFGPIKDYECLCGKYKRMKYKGVICEKCGVEVTLSRVRRERMGHIELAAPVAHIWFLKSLPSRIGTLLDMTLKDIERVLYFENYIVTEPGLTALKQNQLLSEEEYMMAVDEYGEDSFTAMIGAEAIHHLLASMELEKIAGDLRSELASTTSDLKQKKLLKRLKVVENFLESGNKPEWMVMKIIPVIPPDLRPLVPLDGGRFATSDLNDLYRRVINRNNRLKRLIELKAPGIIIRNEKRMLQEAVDALFDNGRRGRVITGANKRPLKSLSDMLKGKQGRFRQNLLGKRVDYSGRSVIVTGPELKLHQCGLPKKMALELFKPFIYARLDAKGYSSTVKQAKKLVEKEKPEVWDILDEVIREHPVLLNRAPTLHRLGIQAFEPILIEGKAIQLHPLVCTAFNADFDGDQMAVHVPLSLEAQLEARVLMMSTNNILHPASGAPIIVPSQDMVLGLYYLSIMNQNEPGEGMVFADMGELQHALETKVVTLHSKIKGRYKTVDENGNPVSMIYETTPGRMIIGELLPKNHNVPFDICNQELTKKNISKMIDTVYRHCGQKETVIFCDRIMALGFSHACKAGISFGKDDMVIPETKAKLIAETEALAKEYEQQYNDGLITQGEKYNKVVDAWAKCSERVADEMMKRIKAIEFDDSGRQKQMNSIYMMSHSGARGSPAQMRQLAGMRGLMARPDGSIIETPIISNFKEGLTVMEYFNSTHGARKGLADTALKTANSGYLTRRLVDVAQDCIVVTPDCGTDKGLTMQPIVDAGQVVASIGQRVLGRTALDDVVNPATGEVIVQAGRLIDERDVEAIEAAGIQTVRIRSALTCEVRTGVCAVCYGRDLARGTPVNIGEAVGVIAAQSIGEPGTQLTMRTFHMGGTAQVVDQSFLEASFEGTVKIRNRNVVRNSDGHLVVMGRNMAVLILDEAGAERASHKVTYGSRIFVDDGDKVKRGQRIAEWDPYTRPMLTEVEGTVAFEDLVDGISVQETTDESTGITKREVIDWRSTPRGSDLKPAITILDSKGKVAKLARGGDARFLLSVETVLSVDSGAKVRPGDVVARIPTESARTKDITGGLPRVAELFEARRPKDHAIIAEIDGTVRFGRDYKNKRRIIIEPHDSTLEPVEYLIPKGKPFHLQDGDVIEKGDFILDGNPAPHDILAIKGVEALASYLVNEIQEVYRLQGVLINDKHIEVIVRQMLQKVEITAQGDSTYIPGDHVDQVEFDEVNDRLVEEGKKPAEGQPVLLGITKASLQTPSFISAASFQETTRVLTEAAVAGKIDTLQGLKENVIVGRLIPAGTGGAMAQIRRIARSRDDLILDERRKESGVEMANPAIADMAGQPAE.

Zn(2+) contacts are provided by Cys71, Cys73, Cys86, and Cys89. Mg(2+) contacts are provided by Asp462, Asp464, and Asp466. Residues Cys810, Cys884, Cys891, and Cys894 each contribute to the Zn(2+) site.

It belongs to the RNA polymerase beta' chain family. As to quaternary structure, the RNAP catalytic core consists of 2 alpha, 1 beta, 1 beta' and 1 omega subunit. When a sigma factor is associated with the core the holoenzyme is formed, which can initiate transcription. It depends on Mg(2+) as a cofactor. Zn(2+) is required as a cofactor.

It catalyses the reaction RNA(n) + a ribonucleoside 5'-triphosphate = RNA(n+1) + diphosphate. DNA-dependent RNA polymerase catalyzes the transcription of DNA into RNA using the four ribonucleoside triphosphates as substrates. The polypeptide is DNA-directed RNA polymerase subunit beta' (Chelativorans sp. (strain BNC1)).